We begin with the raw amino-acid sequence, 245 residues long: 1-(5-phosphoribosyl)-5-[(5-phosphoribosylamino)methylideneamino] imidazole-4-carboxamide isomerase (245 aa).

The active-site Proton acceptor is the Asp8. Asp129 serves as the catalytic Proton donor.

The protein belongs to the HisA/HisF family.

The protein resides in the cytoplasm. The catalysed reaction is 1-(5-phospho-beta-D-ribosyl)-5-[(5-phospho-beta-D-ribosylamino)methylideneamino]imidazole-4-carboxamide = 5-[(5-phospho-1-deoxy-D-ribulos-1-ylimino)methylamino]-1-(5-phospho-beta-D-ribosyl)imidazole-4-carboxamide. It participates in amino-acid biosynthesis; L-histidine biosynthesis; L-histidine from 5-phospho-alpha-D-ribose 1-diphosphate: step 4/9. The protein is 1-(5-phosphoribosyl)-5-[(5-phosphoribosylamino)methylideneamino] imidazole-4-carboxamide isomerase of Rhodopseudomonas palustris (strain BisB5).